Here is a 150-residue protein sequence, read N- to C-terminus: UPF0178 protein Bcep1808_1605 (150 aa).

Belongs to the UPF0178 family.

The sequence is that of UPF0178 protein Bcep1808_1605 from Burkholderia vietnamiensis (strain G4 / LMG 22486) (Burkholderia cepacia (strain R1808)).